The primary structure comprises 159 residues: MSYSITSPSQFVFLSSVWADPIELLNVCTNSLGNQFQTQQARTTVQQQFSEVWKPFPQSTVRFPGDVYKVYRYNAVLDPLITALLGSFDTRNRIIEVENQQSPTTAETLDATRRVDDATVAIRSAINNLVNELVRGTGLYNQNTFESMSGLVWTSAPAS.

Ser-2 is subject to N-acetylserine; by host.

The protein belongs to the virgaviridae capsid protein family.

It is found in the virion. Its function is as follows. Capsid protein self-assembles to form rod-shaped virions about 18 nm in diameter with a central canal enclosing the viral genomic RNA. This Tomato mosaic virus (strain S-1) (ToMV) protein is Capsid protein (CP).